A 1410-amino-acid chain; its full sequence is DNA-directed RNA polymerase subunit beta' (1410 aa).

Cysteine 70, cysteine 72, cysteine 85, and cysteine 88 together coordinate Zn(2+). Aspartate 460, aspartate 462, and aspartate 464 together coordinate Mg(2+). Zn(2+)-binding residues include cysteine 814, cysteine 888, cysteine 895, and cysteine 898.

This sequence belongs to the RNA polymerase beta' chain family. As to quaternary structure, the RNAP catalytic core consists of 2 alpha, 1 beta, 1 beta' and 1 omega subunit. When a sigma factor is associated with the core the holoenzyme is formed, which can initiate transcription. The cofactor is Mg(2+). Zn(2+) is required as a cofactor.

The catalysed reaction is RNA(n) + a ribonucleoside 5'-triphosphate = RNA(n+1) + diphosphate. DNA-dependent RNA polymerase catalyzes the transcription of DNA into RNA using the four ribonucleoside triphosphates as substrates. This is DNA-directed RNA polymerase subunit beta' from Shewanella denitrificans (strain OS217 / ATCC BAA-1090 / DSM 15013).